A 726-amino-acid chain; its full sequence is Catalase-peroxidase (726 aa).

Residues 1–33 are disordered; it reads MSTTDDTHNTLSTGKCPFHQGGHDRSAGAGTAS. A cross-link (tryptophyl-tyrosyl-methioninium (Trp-Tyr) (with M-252)) is located at residues 105–226; the sequence is WHGAGTYRSI…LGATEMGLIY (122 aa). The active-site Proton acceptor is H106. The tryptophyl-tyrosyl-methioninium (Tyr-Met) (with W-105) cross-link spans 226–252; the sequence is YVNPEGPDHSGEPLSAAAAIRATFGNM. H267 lines the heme b pocket.

Belongs to the peroxidase family. Peroxidase/catalase subfamily. In terms of assembly, homodimer or homotetramer. Heme b is required as a cofactor. Formation of the three residue Trp-Tyr-Met cross-link is important for the catalase, but not the peroxidase activity of the enzyme.

The enzyme catalyses H2O2 + AH2 = A + 2 H2O. It carries out the reaction 2 H2O2 = O2 + 2 H2O. In terms of biological role, bifunctional enzyme with both catalase and broad-spectrum peroxidase activity. The sequence is that of Catalase-peroxidase from Salmonella typhi.